The primary structure comprises 283 residues: Bifunctional protein FolD (283 aa).

NADP(+) contacts are provided by residues 166-168 and I232; that span reads GAS.

This sequence belongs to the tetrahydrofolate dehydrogenase/cyclohydrolase family. As to quaternary structure, homodimer.

It carries out the reaction (6R)-5,10-methylene-5,6,7,8-tetrahydrofolate + NADP(+) = (6R)-5,10-methenyltetrahydrofolate + NADPH. It catalyses the reaction (6R)-5,10-methenyltetrahydrofolate + H2O = (6R)-10-formyltetrahydrofolate + H(+). It participates in one-carbon metabolism; tetrahydrofolate interconversion. Functionally, catalyzes the oxidation of 5,10-methylenetetrahydrofolate to 5,10-methenyltetrahydrofolate and then the hydrolysis of 5,10-methenyltetrahydrofolate to 10-formyltetrahydrofolate. In Hamiltonella defensa subsp. Acyrthosiphon pisum (strain 5AT), this protein is Bifunctional protein FolD.